Reading from the N-terminus, the 82-residue chain is ATP synthase subunit c, chloroplastic (82 aa).

The next 2 membrane-spanning stretches (helical) occupy residues Pro3 to Gly23 and Leu57 to Ala77.

Belongs to the ATPase C chain family. As to quaternary structure, F-type ATPases have 2 components, F(1) - the catalytic core - and F(0) - the membrane proton channel. F(1) has five subunits: alpha(3), beta(3), gamma(1), delta(1), epsilon(1). F(0) has four main subunits: a(1), b(1), b'(1) and c(10-14). The alpha and beta chains form an alternating ring which encloses part of the gamma chain. F(1) is attached to F(0) by a central stalk formed by the gamma and epsilon chains, while a peripheral stalk is formed by the delta, b and b' chains.

The protein resides in the plastid. The protein localises to the chloroplast thylakoid membrane. Functionally, f(1)F(0) ATP synthase produces ATP from ADP in the presence of a proton or sodium gradient. F-type ATPases consist of two structural domains, F(1) containing the extramembraneous catalytic core and F(0) containing the membrane proton channel, linked together by a central stalk and a peripheral stalk. During catalysis, ATP synthesis in the catalytic domain of F(1) is coupled via a rotary mechanism of the central stalk subunits to proton translocation. Its function is as follows. Key component of the F(0) channel; it plays a direct role in translocation across the membrane. A homomeric c-ring of between 10-14 subunits forms the central stalk rotor element with the F(1) delta and epsilon subunits. This Cyanidium caldarium (Red alga) protein is ATP synthase subunit c, chloroplastic.